The following is a 207-amino-acid chain: Small ribosomal subunit protein uS4 (207 aa).

Positions 31 to 51 (KCKLDSKPGQHGRTSGARTSD) are disordered. The region spanning 97 to 160 (SRLDNVVYRM…KKQARIRESL (64 aa)) is the S4 RNA-binding domain.

Belongs to the universal ribosomal protein uS4 family. As to quaternary structure, part of the 30S ribosomal subunit. Contacts protein S5. The interaction surface between S4 and S5 is involved in control of translational fidelity.

Functionally, one of the primary rRNA binding proteins, it binds directly to 16S rRNA where it nucleates assembly of the body of the 30S subunit. With S5 and S12 plays an important role in translational accuracy. The protein is Small ribosomal subunit protein uS4 of Bordetella avium (strain 197N).